We begin with the raw amino-acid sequence, 284 residues long: Bifunctional protein FolD (284 aa).

Residues Gly165 to Gly167, Thr192, and Val233 each bind NADP(+).

Belongs to the tetrahydrofolate dehydrogenase/cyclohydrolase family. Homodimer.

It carries out the reaction (6R)-5,10-methylene-5,6,7,8-tetrahydrofolate + NADP(+) = (6R)-5,10-methenyltetrahydrofolate + NADPH. The enzyme catalyses (6R)-5,10-methenyltetrahydrofolate + H2O = (6R)-10-formyltetrahydrofolate + H(+). It participates in one-carbon metabolism; tetrahydrofolate interconversion. Catalyzes the oxidation of 5,10-methylenetetrahydrofolate to 5,10-methenyltetrahydrofolate and then the hydrolysis of 5,10-methenyltetrahydrofolate to 10-formyltetrahydrofolate. This chain is Bifunctional protein FolD, found in Corynebacterium glutamicum (strain R).